The chain runs to 677 residues: Electrogenic aspartate/glutamate antiporter SLC25A12, mitochondrial (677 aa).

Residue Ala2 is modified to N-acetylalanine. Positions 2 to 294 (AVKVHTTKRG…TLADIERIAP (293 aa)) are regulatory N-terminal domain. Residues 2-329 (AVKVHTTKRG…WLQIAESAYR (328 aa)) are Mitochondrial intermembrane-facing. 4 consecutive EF-hand domains span residues 40 to 85 (VQRY…SVLC), 86 to 121 (APDS…TIIH), 122 to 156 (HHIP…FLQE), and 157 to 192 (LQLE…IRSH). The Ca(2+) site is built by Asp65, Thr67, Asp69, Leu71, and Glu76. The segment at 295–310 (LAEGALPYNLAELQRQ) is linker loop domain. Residues 320–612 (WLQIAESAYR…RWFYIDFGGL (293 aa)) form a carrier domain region. Solcar repeat units follow at residues 324–416 (AESA…VRDK), 424–508 (IPLP…CKLL), and 516–604 (VGGI…LQRW). A helical membrane pass occupies residues 330–347 (FTLGSVAGAVGATAVYPI). The Mitochondrial matrix portion of the chain corresponds to 348 to 390 (DLVKTRMQNQRGTGSVVGELMYKNSFDCFKKVLRYEGFFGLYR). A helical membrane pass occupies residues 391-410 (GLIPQLIGVAPEKAIKLTVN). Residues 411–433 (DFVRDKFTKRDGSIPLPAEILAG) are Mitochondrial intermembrane-facing. Residues 434 to 447 (GCAGGSQVIFTNPL) form a helical membrane-spanning segment. Over 448–482 (EIVKIRLQVAGEITTGPRVSALNVLQDLGLFGLYK) the chain is Mitochondrial matrix. The chain crosses the membrane as a helical span at residues 483-502 (GAKACFLRDIPFSAIYFPVY). The Mitochondrial intermembrane portion of the chain corresponds to 503 to 521 (AHCKLLLADENGRVGGINL). The helical transmembrane segment at 522 to 539 (LTAGALAGVPAASLVTPA) threads the bilayer. Topologically, residues 540-578 (DVIKTRLQVAARAGQTTYSGVVDCFRKILREEGPSAFWK) are mitochondrial matrix. A helical membrane pass occupies residues 579-598 (GTAARVFRSSPQFGVTLVTY). Residues 599–677 (ELLQRWFYID…AQPKAAAAAQ (79 aa)) lie on the Mitochondrial intermembrane side of the membrane. Residues 613–677 (KPSGSEPTPK…AQPKAAAAAQ (65 aa)) are C-terminal domain.

The protein belongs to the mitochondrial carrier (TC 2.A.29) family. Homodimer (via N-terminus).

The protein localises to the mitochondrion inner membrane. The enzyme catalyses L-aspartate(in) + L-glutamate(out) + H(+)(out) = L-aspartate(out) + L-glutamate(in) + H(+)(in). The catalysed reaction is 3-sulfino-L-alanine(out) + L-glutamate(in) + H(+)(in) = 3-sulfino-L-alanine(in) + L-glutamate(out) + H(+)(out). It carries out the reaction 3-sulfino-L-alanine(out) + L-aspartate(in) = 3-sulfino-L-alanine(in) + L-aspartate(out). Functionally, mitochondrial electrogenic aspartate/glutamate antiporter that favors efflux of aspartate and entry of glutamate and proton within the mitochondria as part of the malate-aspartate shuttle. Also mediates the uptake of L-cysteinesulfinate (3-sulfino-L-alanine) by mitochondria in exchange of L-glutamate and proton. Can also exchange L-cysteinesulfinate with aspartate in their anionic form without any proton translocation. Lacks transport activity towards L-glutamine or gamma-aminobutyric acid (GABA). The polypeptide is Electrogenic aspartate/glutamate antiporter SLC25A12, mitochondrial (Mus musculus (Mouse)).